The primary structure comprises 293 residues: Ribosomal RNA small subunit methyltransferase H (293 aa).

Residues 32-34, D51, F78, D99, and Q106 contribute to the S-adenosyl-L-methionine site; that span reads GGH. A disordered region spans residues 272–293; it reads SDEEIKENPASRSAKLRVGRRI.

Belongs to the methyltransferase superfamily. RsmH family.

It is found in the cytoplasm. It catalyses the reaction cytidine(1402) in 16S rRNA + S-adenosyl-L-methionine = N(4)-methylcytidine(1402) in 16S rRNA + S-adenosyl-L-homocysteine + H(+). In terms of biological role, specifically methylates the N4 position of cytidine in position 1402 (C1402) of 16S rRNA. This chain is Ribosomal RNA small subunit methyltransferase H, found in Sulfurihydrogenibium sp. (strain YO3AOP1).